A 423-amino-acid chain; its full sequence is Transcription factor bHLH14 (423 aa).

Residues 192–243 (GKTTKHTNQTGSYPKPAVSDHSKSGNQQFGSERKRRRKLETTRVAAATKEKH) are disordered. Residues 245–294 (PAVLSHVEAEKQRREKLNHRFYALRAIVPKVSRMDKASLLSDAVSYIESL) form the bHLH domain. The tract at residues 312-343 (ETDKLDNSSSNTSPSSVEYQVNQKPSKSNRGS) is disordered. A compositionally biased stretch (low complexity) spans 318-327 (NSSSNTSPSS). Residues 328–342 (VEYQVNQKPSKSNRG) show a composition bias toward polar residues.

Homodimer.

The protein localises to the nucleus. The chain is Transcription factor bHLH14 (BHLH14) from Arabidopsis thaliana (Mouse-ear cress).